The sequence spans 449 residues: Transport protein ComB (449 aa).

Topologically, residues 1-20 are cytoplasmic; the sequence is MKPEFLESAEFYNRRYHNFS. A helical transmembrane segment spans residues 21 to 41; sequence SSVIVPMALLLVFLLGFATVA. Over 42-449 the chain is Extracellular; it reads EKEMSLSTRA…YYLDQFLNKE (408 aa).

Belongs to the membrane fusion protein (MFP) (TC 8.A.1) family.

Its subcellular location is the cell membrane. Functionally, required for induction of competence. This is Transport protein ComB (comB) from Streptococcus pneumoniae (strain ATCC BAA-255 / R6).